A 277-amino-acid polypeptide reads, in one-letter code: 4-hydroxy-tetrahydrodipicolinate reductase (277 aa).

9–14 (GATGRM) is a binding site for NAD(+). K37 serves as a coordination point for NADP(+). Position 75–77 (75–77 (GTS)) interacts with NAD(+). H132 serves as the catalytic Proton donor/acceptor. K136 (proton donor) is an active-site residue. 142 to 143 (GT) is a (S)-2,3,4,5-tetrahydrodipicolinate binding site. A disordered region spans residues 245–277 (SRERATQTAPTGAASGPVDDGGPSGQAATVTSA).

Belongs to the DapB family.

The protein localises to the cytoplasm. It catalyses the reaction (S)-2,3,4,5-tetrahydrodipicolinate + NAD(+) + H2O = (2S,4S)-4-hydroxy-2,3,4,5-tetrahydrodipicolinate + NADH + H(+). The enzyme catalyses (S)-2,3,4,5-tetrahydrodipicolinate + NADP(+) + H2O = (2S,4S)-4-hydroxy-2,3,4,5-tetrahydrodipicolinate + NADPH + H(+). It functions in the pathway amino-acid biosynthesis; L-lysine biosynthesis via DAP pathway; (S)-tetrahydrodipicolinate from L-aspartate: step 4/4. In terms of biological role, catalyzes the conversion of 4-hydroxy-tetrahydrodipicolinate (HTPA) to tetrahydrodipicolinate. This Clavibacter sepedonicus (Clavibacter michiganensis subsp. sepedonicus) protein is 4-hydroxy-tetrahydrodipicolinate reductase.